The primary structure comprises 494 residues: Glutamyl-tRNA(Gln) amidotransferase subunit A (494 aa).

Residues Lys-88 and Ser-163 each act as charge relay system in the active site. Ser-187 serves as the catalytic Acyl-ester intermediate.

This sequence belongs to the amidase family. GatA subfamily. As to quaternary structure, heterotrimer of A, B and C subunits.

The catalysed reaction is L-glutamyl-tRNA(Gln) + L-glutamine + ATP + H2O = L-glutaminyl-tRNA(Gln) + L-glutamate + ADP + phosphate + H(+). Its function is as follows. Allows the formation of correctly charged Gln-tRNA(Gln) through the transamidation of misacylated Glu-tRNA(Gln) in organisms which lack glutaminyl-tRNA synthetase. The reaction takes place in the presence of glutamine and ATP through an activated gamma-phospho-Glu-tRNA(Gln). The protein is Glutamyl-tRNA(Gln) amidotransferase subunit A of Corynebacterium diphtheriae (strain ATCC 700971 / NCTC 13129 / Biotype gravis).